The primary structure comprises 409 residues: Elongation factor Tu, chloroplastic (409 aa).

One can recognise a tr-type G domain in the interval Lys-10–Val-214. The segment at Gly-19–Thr-26 is G1. Gly-19 to Thr-26 serves as a coordination point for GTP. A Mg(2+)-binding site is contributed by Thr-26. A G2 region spans residues Gly-60–Asn-64. The segment at Asp-81–Gly-84 is G3. GTP-binding positions include Asp-81–His-85 and Asn-136–Asp-139. Residues Asn-136 to Asp-139 are G4. Residues Ser-174–Leu-176 form a G5 region.

This sequence belongs to the TRAFAC class translation factor GTPase superfamily. Classic translation factor GTPase family. EF-Tu/EF-1A subfamily.

It localises to the plastid. It is found in the chloroplast. It catalyses the reaction GTP + H2O = GDP + phosphate + H(+). GTP hydrolase that promotes the GTP-dependent binding of aminoacyl-tRNA to the A-site of ribosomes during protein biosynthesis. This is Elongation factor Tu, chloroplastic (tufA) from Tupiella akineta (Green alga).